The following is a 410-amino-acid chain: Tryptophan synthase beta chain (410 aa).

Lys-98 carries the post-translational modification N6-(pyridoxal phosphate)lysine.

This sequence belongs to the TrpB family. As to quaternary structure, tetramer of two alpha and two beta chains. Requires pyridoxal 5'-phosphate as cofactor.

It catalyses the reaction (1S,2R)-1-C-(indol-3-yl)glycerol 3-phosphate + L-serine = D-glyceraldehyde 3-phosphate + L-tryptophan + H2O. The protein operates within amino-acid biosynthesis; L-tryptophan biosynthesis; L-tryptophan from chorismate: step 5/5. Functionally, the beta subunit is responsible for the synthesis of L-tryptophan from indole and L-serine. This is Tryptophan synthase beta chain from Dinoroseobacter shibae (strain DSM 16493 / NCIMB 14021 / DFL 12).